Here is an 87-residue protein sequence, read N- to C-terminus: Large ribosomal subunit protein bL31B (87 aa).

It belongs to the bacterial ribosomal protein bL31 family. Type B subfamily. Part of the 50S ribosomal subunit.

The polypeptide is Large ribosomal subunit protein bL31B (Shigella boydii serotype 4 (strain Sb227)).